We begin with the raw amino-acid sequence, 144 residues long: Large ribosomal subunit protein uL15 (144 aa).

Residues 1-56 (MELNNLKPAAGAKHAKRRVGRGIGSGLGKTAGRGHKGQKSRSGGFHKVGFEGGQMP) are disordered. Residues 21–31 (RGIGSGLGKTA) are compositionally biased toward gly residues.

Belongs to the universal ribosomal protein uL15 family. As to quaternary structure, part of the 50S ribosomal subunit.

Binds to the 23S rRNA. This Burkholderia cenocepacia (strain HI2424) protein is Large ribosomal subunit protein uL15.